The following is an 81-amino-acid chain: Acyl carrier protein (81 aa).

A Carrier domain is found at 2 to 80; the sequence is ASKEEILAGL…DAVDFIDGAQ (79 aa). Residue S40 is modified to O-(pantetheine 4'-phosphoryl)serine.

The protein belongs to the acyl carrier protein (ACP) family. In terms of processing, 4'-phosphopantetheine is transferred from CoA to a specific serine of apo-ACP by AcpS. This modification is essential for activity because fatty acids are bound in thioester linkage to the sulfhydryl of the prosthetic group.

It localises to the cytoplasm. Its pathway is lipid metabolism; fatty acid biosynthesis. Its function is as follows. Carrier of the growing fatty acid chain in fatty acid biosynthesis. The chain is Acyl carrier protein from Micrococcus luteus (strain ATCC 4698 / DSM 20030 / JCM 1464 / CCM 169 / CCUG 5858 / IAM 1056 / NBRC 3333 / NCIMB 9278 / NCTC 2665 / VKM Ac-2230) (Micrococcus lysodeikticus).